The chain runs to 555 residues: Formate--tetrahydrofolate ligase (555 aa).

65 to 72 serves as a coordination point for ATP; the sequence is TPAGEGKS.

Belongs to the formate--tetrahydrofolate ligase family.

The enzyme catalyses (6S)-5,6,7,8-tetrahydrofolate + formate + ATP = (6R)-10-formyltetrahydrofolate + ADP + phosphate. It participates in one-carbon metabolism; tetrahydrofolate interconversion. In Staphylococcus carnosus (strain TM300), this protein is Formate--tetrahydrofolate ligase.